The primary structure comprises 157 residues: UPF0262 protein RHE_CH00582 (157 aa).

It belongs to the UPF0262 family.

This is UPF0262 protein RHE_CH00582 from Rhizobium etli (strain ATCC 51251 / DSM 11541 / JCM 21823 / NBRC 15573 / CFN 42).